The primary structure comprises 396 residues: Mannonate dehydratase (396 aa).

It belongs to the mannonate dehydratase family. Fe(2+) serves as cofactor. Requires Mn(2+) as cofactor.

It catalyses the reaction D-mannonate = 2-dehydro-3-deoxy-D-gluconate + H2O. It participates in carbohydrate metabolism; pentose and glucuronate interconversion. Catalyzes the dehydration of D-mannonate. The chain is Mannonate dehydratase from Enterobacter sp. (strain 638).